A 345-amino-acid chain; its full sequence is Holliday junction branch migration complex subunit RuvB (345 aa).

The segment at 1–186 is large ATPase domain (RuvB-L); the sequence is MSTDPDEREV…FGFTAHMDFY (186 aa). ATP is bound by residues Leu25, Arg26, Gly67, Lys70, Thr71, Ser72, 133–135, Arg176, Tyr186, and Arg223; that span reads EDF. Thr71 contacts Mg(2+). The segment at 187–257 is small ATPAse domain (RuvB-S); the sequence is EPAELERVLV…VAKAALAVYD (71 aa). The segment at 260-345 is head domain (RuvB-H); it reads ELGLDRLDRA…AGANQPGLFE (86 aa). 2 residues coordinate DNA: Arg315 and Arg320.

The protein belongs to the RuvB family. As to quaternary structure, homohexamer. Forms an RuvA(8)-RuvB(12)-Holliday junction (HJ) complex. HJ DNA is sandwiched between 2 RuvA tetramers; dsDNA enters through RuvA and exits via RuvB. An RuvB hexamer assembles on each DNA strand where it exits the tetramer. Each RuvB hexamer is contacted by two RuvA subunits (via domain III) on 2 adjacent RuvB subunits; this complex drives branch migration. In the full resolvosome a probable DNA-RuvA(4)-RuvB(12)-RuvC(2) complex forms which resolves the HJ.

The protein resides in the cytoplasm. The enzyme catalyses ATP + H2O = ADP + phosphate + H(+). Its function is as follows. The RuvA-RuvB-RuvC complex processes Holliday junction (HJ) DNA during genetic recombination and DNA repair, while the RuvA-RuvB complex plays an important role in the rescue of blocked DNA replication forks via replication fork reversal (RFR). RuvA specifically binds to HJ cruciform DNA, conferring on it an open structure. The RuvB hexamer acts as an ATP-dependent pump, pulling dsDNA into and through the RuvAB complex. RuvB forms 2 homohexamers on either side of HJ DNA bound by 1 or 2 RuvA tetramers; 4 subunits per hexamer contact DNA at a time. Coordinated motions by a converter formed by DNA-disengaged RuvB subunits stimulates ATP hydrolysis and nucleotide exchange. Immobilization of the converter enables RuvB to convert the ATP-contained energy into a lever motion, pulling 2 nucleotides of DNA out of the RuvA tetramer per ATP hydrolyzed, thus driving DNA branch migration. The RuvB motors rotate together with the DNA substrate, which together with the progressing nucleotide cycle form the mechanistic basis for DNA recombination by continuous HJ branch migration. Branch migration allows RuvC to scan DNA until it finds its consensus sequence, where it cleaves and resolves cruciform DNA. In Mycobacterium ulcerans (strain Agy99), this protein is Holliday junction branch migration complex subunit RuvB.